Here is a 230-residue protein sequence, read N- to C-terminus: Ribonuclease 3 (230 aa).

Positions 5-125 (YSRFYNILGY…VIGAIYLDSD (121 aa)) constitute an RNase III domain. E40 contributes to the Mg(2+) binding site. D44 is an active-site residue. Mg(2+)-binding residues include D111 and E114. Residue E114 is part of the active site. One can recognise a DRBM domain in the interval 153-223 (DSKSKLQEIL…AEKMIEMLSQ (71 aa)).

Belongs to the ribonuclease III family. As to quaternary structure, homodimer. The cofactor is Mg(2+).

It is found in the cytoplasm. The enzyme catalyses Endonucleolytic cleavage to 5'-phosphomonoester.. Its function is as follows. Digests double-stranded RNA. Involved in the processing of primary rRNA transcript to yield the immediate precursors to the large and small rRNAs (23S and 16S). Processes some mRNAs, and tRNAs when they are encoded in the rRNA operon. Processes pre-crRNA and tracrRNA of type II CRISPR loci if present in the organism. In Francisella tularensis subsp. holarctica (strain OSU18), this protein is Ribonuclease 3.